Reading from the N-terminus, the 211-residue chain is Thymidylate kinase (211 aa).

7–14 is an ATP binding site; it reads GIDASGKS.

Belongs to the thymidylate kinase family.

The catalysed reaction is dTMP + ATP = dTDP + ADP. Its function is as follows. Phosphorylation of dTMP to form dTDP in both de novo and salvage pathways of dTTP synthesis. In Mesomycoplasma hyopneumoniae (strain 7448) (Mycoplasma hyopneumoniae), this protein is Thymidylate kinase.